The following is a 282-amino-acid chain: Bifunctional protein FolD (282 aa).

Residues 165-167 (GRS), Ser-190, and Thr-231 each bind NADP(+).

Belongs to the tetrahydrofolate dehydrogenase/cyclohydrolase family. Homodimer.

It catalyses the reaction (6R)-5,10-methylene-5,6,7,8-tetrahydrofolate + NADP(+) = (6R)-5,10-methenyltetrahydrofolate + NADPH. The enzyme catalyses (6R)-5,10-methenyltetrahydrofolate + H2O = (6R)-10-formyltetrahydrofolate + H(+). It functions in the pathway one-carbon metabolism; tetrahydrofolate interconversion. Catalyzes the oxidation of 5,10-methylenetetrahydrofolate to 5,10-methenyltetrahydrofolate and then the hydrolysis of 5,10-methenyltetrahydrofolate to 10-formyltetrahydrofolate. The sequence is that of Bifunctional protein FolD from Clostridium botulinum (strain Eklund 17B / Type B).